Here is a 352-residue protein sequence, read N- to C-terminus: Large ribosomal subunit protein uL10 (352 aa).

Over residues 286–297 the composition is skewed to acidic residues; the sequence is DDEDALPEELQD. The interval 286 to 352 is disordered; the sequence is DDEDALPEEL…GAEGLGEMFG (67 aa). Residues 299 to 310 are compositionally biased toward low complexity; sequence DAPAAPAGGEAD. The span at 324 to 340 shows a compositional bias: acidic residues; it reads EADDADDSDDDDDDDDG. Gly residues predominate over residues 343 to 352; it reads GAEGLGEMFG.

The protein belongs to the universal ribosomal protein uL10 family. As to quaternary structure, part of the 50S ribosomal subunit. Forms part of the ribosomal stalk which helps the ribosome interact with GTP-bound translation factors. Forms a heptameric L10(L12)2(L12)2(L12)2 complex, where L10 forms an elongated spine to which the L12 dimers bind in a sequential fashion.

Functionally, forms part of the ribosomal stalk, playing a central role in the interaction of the ribosome with GTP-bound translation factors. This chain is Large ribosomal subunit protein uL10, found in Halobacterium salinarum (strain ATCC 700922 / JCM 11081 / NRC-1) (Halobacterium halobium).